The sequence spans 53 residues: Alpha-1-antiproteinase 1 (53 aa).

The disordered stretch occupies residues 1 to 28; sequence EDLQGDAVPETSATKDDNEXPEMIPMSL.

This sequence belongs to the serpin family. Post-translationally, N-glycosylated; contains biantennary glycans. As to expression, plasma.

It is found in the secreted. This chain is Alpha-1-antiproteinase 1, found in Equus caballus (Horse).